The sequence spans 395 residues: 1-deoxy-D-xylulose 5-phosphate reductoisomerase (395 aa).

NADPH-binding residues include threonine 10, glycine 11, serine 12, isoleucine 13, and asparagine 123. Lysine 124 contacts 1-deoxy-D-xylulose 5-phosphate. NADPH is bound at residue glutamate 125. Aspartate 149 is a Mn(2+) binding site. 1-deoxy-D-xylulose 5-phosphate is bound by residues serine 150, glutamate 151, serine 185, and histidine 208. Mn(2+) is bound at residue glutamate 151. Glycine 214 is a binding site for NADPH. 1-deoxy-D-xylulose 5-phosphate contacts are provided by serine 221, asparagine 226, lysine 227, and glutamate 230. A Mn(2+)-binding site is contributed by glutamate 230.

It belongs to the DXR family. It depends on Mg(2+) as a cofactor. Mn(2+) is required as a cofactor.

It carries out the reaction 2-C-methyl-D-erythritol 4-phosphate + NADP(+) = 1-deoxy-D-xylulose 5-phosphate + NADPH + H(+). It functions in the pathway isoprenoid biosynthesis; isopentenyl diphosphate biosynthesis via DXP pathway; isopentenyl diphosphate from 1-deoxy-D-xylulose 5-phosphate: step 1/6. In terms of biological role, catalyzes the NADPH-dependent rearrangement and reduction of 1-deoxy-D-xylulose-5-phosphate (DXP) to 2-C-methyl-D-erythritol 4-phosphate (MEP). The sequence is that of 1-deoxy-D-xylulose 5-phosphate reductoisomerase from Shewanella sediminis (strain HAW-EB3).